The following is a 118-amino-acid chain: Large ribosomal subunit protein uL22 (118 aa).

It belongs to the universal ribosomal protein uL22 family. In terms of assembly, part of the 50S ribosomal subunit.

Its function is as follows. This protein binds specifically to 23S rRNA; its binding is stimulated by other ribosomal proteins, e.g. L4, L17, and L20. It is important during the early stages of 50S assembly. It makes multiple contacts with different domains of the 23S rRNA in the assembled 50S subunit and ribosome. The globular domain of the protein is located near the polypeptide exit tunnel on the outside of the subunit, while an extended beta-hairpin is found that lines the wall of the exit tunnel in the center of the 70S ribosome. This is Large ribosomal subunit protein uL22 from Listeria innocua serovar 6a (strain ATCC BAA-680 / CLIP 11262).